Here is a 91-residue protein sequence, read N- to C-terminus: Small ribosomal subunit protein uS19 (91 aa).

Belongs to the universal ribosomal protein uS19 family.

Functionally, protein S19 forms a complex with S13 that binds strongly to the 16S ribosomal RNA. The protein is Small ribosomal subunit protein uS19 of Cupriavidus taiwanensis (strain DSM 17343 / BCRC 17206 / CCUG 44338 / CIP 107171 / LMG 19424 / R1) (Ralstonia taiwanensis (strain LMG 19424)).